Reading from the N-terminus, the 262-residue chain is Thrombin-like enzyme gyroxin B1.4 (262 aa).

An N-terminal signal peptide occupies residues 1-18 (MVLIRVLANLLILQLSYA). Residues 19–262 (QKSSELVIGG…AGNTIVNCPP (244 aa)) constitute a propeptide that is removed on maturation. Residues 25–253 (VIGGDECNIN…HLDWIQSIIA (229 aa)) form the Peptidase S1 domain. Disulfide bonds link Cys31-Cys165, Cys52-Cys68, Cys102-Cys260, Cys144-Cys214, Cys176-Cys193, and Cys204-Cys229. His67 serves as the catalytic Charge relay system. An N-linked (GlcNAc...) asparagine glycan is attached at Asn105. Asp112 functions as the Charge relay system in the catalytic mechanism. Residue Ser208 is the Charge relay system of the active site.

It belongs to the peptidase S1 family. Snake venom subfamily. In terms of assembly, monomer. Expressed by the venom gland.

The protein localises to the secreted. Its function is as follows. Thrombin-like snake venom serine protease. Displays a specificity similar to trypsin. Releases only fibrinopeptide A in the conversion of fibrinogen to fibrin. Shows coagulant, esterase and amidase activities. Reversibly increases the permeability of the blood brain barrier (BBB) in mice. Induces the barrel rotation syndrome in mice, which is manifested by gyroxin-like, rapid rolling motions. This syndrome may be due to its effect on BBB permeability, and certainly also to other actions affecting endogenous substrates present in the endothelium, nervous tissues or blood. The chain is Thrombin-like enzyme gyroxin B1.4 from Crotalus durissus terrificus (South American rattlesnake).